Reading from the N-terminus, the 281-residue chain is Nucleotide-binding protein CTN_0898 (281 aa).

9 to 16 is an ATP binding site; it reads GLSGAGKT. 58–61 lines the GTP pocket; it reads DVRS.

This sequence belongs to the RapZ-like family.

Its function is as follows. Displays ATPase and GTPase activities. The protein is Nucleotide-binding protein CTN_0898 of Thermotoga neapolitana (strain ATCC 49049 / DSM 4359 / NBRC 107923 / NS-E).